Reading from the N-terminus, the 180-residue chain is Uterocalin (180 aa).

The signal sequence occupies residues 1 to 18; the sequence is MNLLLLAMGLILPRRPHA. C82 and C175 form a disulfide bridge. N-linked (GlcNAc...) asparagine glycosylation is present at N101.

It belongs to the calycin superfamily. Lipocalin family. In terms of tissue distribution, expressed in glandular and lumenal epithelia of the endometrium. Is transferred to the embryonic capsule, the conceptus and the yolk sac.

It localises to the secreted. Functionally, binds fatty acids and retinol. Is specialized for the preattachment embryo. May be important to maintain the pregnancy and may transport small hydrophobic ligands from mother to the developing embryo. This is Uterocalin from Equus caballus (Horse).